A 260-amino-acid polypeptide reads, in one-letter code: UPF0246 protein Bxeno_A1262 (260 aa).

Belongs to the UPF0246 family.

The sequence is that of UPF0246 protein Bxeno_A1262 from Paraburkholderia xenovorans (strain LB400).